Here is a 116-residue protein sequence, read N- to C-terminus: NADH-ubiquinone oxidoreductase chain 3 (116 aa).

Transmembrane regions (helical) follow at residues 3-23, 56-76, and 85-105; these read LLMTIITITALLSTILAIVSF, FFLIAILFLLFDLEIALLLPL, and PLLTFTWATAVLFLLTLGLIY.

The protein belongs to the complex I subunit 3 family.

It localises to the mitochondrion membrane. It carries out the reaction a ubiquinone + NADH + 5 H(+)(in) = a ubiquinol + NAD(+) + 4 H(+)(out). In terms of biological role, core subunit of the mitochondrial membrane respiratory chain NADH dehydrogenase (Complex I) that is believed to belong to the minimal assembly required for catalysis. Complex I functions in the transfer of electrons from NADH to the respiratory chain. The immediate electron acceptor for the enzyme is believed to be ubiquinone. This is NADH-ubiquinone oxidoreductase chain 3 (MT-ND3) from Paralichthys olivaceus (Bastard halibut).